The sequence spans 245 residues: 1-(5-phosphoribosyl)-5-[(5-phosphoribosylamino)methylideneamino] imidazole-4-carboxamide isomerase (245 aa).

Residue Asp-11 is the Proton acceptor of the active site. The active-site Proton donor is Asp-132.

The protein belongs to the HisA/HisF family.

It is found in the cytoplasm. The enzyme catalyses 1-(5-phospho-beta-D-ribosyl)-5-[(5-phospho-beta-D-ribosylamino)methylideneamino]imidazole-4-carboxamide = 5-[(5-phospho-1-deoxy-D-ribulos-1-ylimino)methylamino]-1-(5-phospho-beta-D-ribosyl)imidazole-4-carboxamide. Its pathway is amino-acid biosynthesis; L-histidine biosynthesis; L-histidine from 5-phospho-alpha-D-ribose 1-diphosphate: step 4/9. The sequence is that of 1-(5-phosphoribosyl)-5-[(5-phosphoribosylamino)methylideneamino] imidazole-4-carboxamide isomerase from Xanthobacter autotrophicus (strain ATCC BAA-1158 / Py2).